Consider the following 72-residue polypeptide: Osmotically-inducible lipoprotein B (72 aa).

An N-terminal signal peptide occupies residues 1–23; it reads MFVTSKKMTAAVLAITLAMSLSA. Residue cysteine 24 is the site of N-palmitoyl cysteine attachment. Cysteine 24 is lipidated: S-diacylglycerol cysteine.

The protein localises to the cell membrane. Its function is as follows. Provides resistance to osmotic stress. May be important for stationary-phase survival. In Escherichia coli O157:H7, this protein is Osmotically-inducible lipoprotein B (osmB).